The following is a 638-amino-acid chain: Threonine--tRNA ligase (638 aa).

One can recognise a TGS domain in the interval 1–61 (MPIITLPDGS…NKDSKVVIIT (61 aa)). The catalytic stretch occupies residues 242–533 (DHRKLGKKHS…LIEQYEAKFP (292 aa)). The Zn(2+) site is built by cysteine 333, histidine 384, and histidine 510.

This sequence belongs to the class-II aminoacyl-tRNA synthetase family. Homodimer. Zn(2+) serves as cofactor.

It localises to the cytoplasm. It carries out the reaction tRNA(Thr) + L-threonine + ATP = L-threonyl-tRNA(Thr) + AMP + diphosphate + H(+). In terms of biological role, catalyzes the attachment of threonine to tRNA(Thr) in a two-step reaction: L-threonine is first activated by ATP to form Thr-AMP and then transferred to the acceptor end of tRNA(Thr). Also edits incorrectly charged L-seryl-tRNA(Thr). This chain is Threonine--tRNA ligase, found in Prochlorococcus marinus (strain MIT 9301).